The primary structure comprises 247 residues: Ribonuclease PH (247 aa).

Residues Arg-90 and Gly-128–Arg-130 each bind phosphate.

It belongs to the RNase PH family. In terms of assembly, homohexameric ring arranged as a trimer of dimers.

It carries out the reaction tRNA(n+1) + phosphate = tRNA(n) + a ribonucleoside 5'-diphosphate. Functionally, phosphorolytic 3'-5' exoribonuclease that plays an important role in tRNA 3'-end maturation. Removes nucleotide residues following the 3'-CCA terminus of tRNAs; can also add nucleotides to the ends of RNA molecules by using nucleoside diphosphates as substrates, but this may not be physiologically important. Probably plays a role in initiation of 16S rRNA degradation (leading to ribosome degradation) during starvation. In Synechococcus sp. (strain CC9605), this protein is Ribonuclease PH.